We begin with the raw amino-acid sequence, 137 residues long: Large ribosomal subunit protein uL16 (137 aa).

The protein belongs to the universal ribosomal protein uL16 family. Part of the 50S ribosomal subunit.

Binds 23S rRNA and is also seen to make contacts with the A and possibly P site tRNAs. The sequence is that of Large ribosomal subunit protein uL16 from Streptococcus thermophilus (strain ATCC BAA-491 / LMD-9).